The chain runs to 396 residues: S-adenosylmethionine synthase (396 aa).

His-16 is a binding site for ATP. Residue Asp-18 coordinates Mg(2+). Residue Glu-44 coordinates K(+). L-methionine contacts are provided by Glu-57 and Gln-100. The segment at 100–110 (QSPDIAQGVNE) is flexible loop. Residues 175–177 (DAK), 242–243 (RF), Asp-251, 257–258 (RK), Ala-274, and Lys-278 each bind ATP. Residue Asp-251 participates in L-methionine binding. Position 282 (Lys-282) interacts with L-methionine.

Belongs to the AdoMet synthase family. As to quaternary structure, homotetramer; dimer of dimers. Mg(2+) is required as a cofactor. Requires K(+) as cofactor.

Its subcellular location is the cytoplasm. It catalyses the reaction L-methionine + ATP + H2O = S-adenosyl-L-methionine + phosphate + diphosphate. Its pathway is amino-acid biosynthesis; S-adenosyl-L-methionine biosynthesis; S-adenosyl-L-methionine from L-methionine: step 1/1. Catalyzes the formation of S-adenosylmethionine (AdoMet) from methionine and ATP. The overall synthetic reaction is composed of two sequential steps, AdoMet formation and the subsequent tripolyphosphate hydrolysis which occurs prior to release of AdoMet from the enzyme. The protein is S-adenosylmethionine synthase of Streptococcus suis (strain 05ZYH33).